The primary structure comprises 398 residues: Succinate--CoA ligase [ADP-forming] subunit beta (398 aa).

Positions 9–253 constitute an ATP-grasp domain; it reads KELLKSYGVA…EAEEDPKELE (245 aa). ATP contacts are provided by residues Lys-46, 53–55, Glu-108, Cys-111, and Glu-116; that span reads GRG. 2 residues coordinate Mg(2+): Asn-208 and Asp-222. Substrate contacts are provided by residues Asn-273 and 330 to 332; that span reads GIM.

The protein belongs to the succinate/malate CoA ligase beta subunit family. In terms of assembly, heterotetramer of two alpha and two beta subunits. Requires Mg(2+) as cofactor.

The catalysed reaction is succinate + ATP + CoA = succinyl-CoA + ADP + phosphate. It carries out the reaction GTP + succinate + CoA = succinyl-CoA + GDP + phosphate. The protein operates within carbohydrate metabolism; tricarboxylic acid cycle; succinate from succinyl-CoA (ligase route): step 1/1. Its function is as follows. Succinyl-CoA synthetase functions in the citric acid cycle (TCA), coupling the hydrolysis of succinyl-CoA to the synthesis of either ATP or GTP and thus represents the only step of substrate-level phosphorylation in the TCA. The beta subunit provides nucleotide specificity of the enzyme and binds the substrate succinate, while the binding sites for coenzyme A and phosphate are found in the alpha subunit. This chain is Succinate--CoA ligase [ADP-forming] subunit beta, found in Acidiphilium cryptum (strain JF-5).